The primary structure comprises 210 residues: Uracil phosphoribosyltransferase (210 aa).

5-phospho-alpha-D-ribose 1-diphosphate is bound by residues arginine 78, arginine 103, and 130 to 138 (DPMLATGGS). Residues isoleucine 195 and 200–202 (GDA) contribute to the uracil site. Aspartate 201 is a binding site for 5-phospho-alpha-D-ribose 1-diphosphate.

This sequence belongs to the UPRTase family. Requires Mg(2+) as cofactor.

It carries out the reaction UMP + diphosphate = 5-phospho-alpha-D-ribose 1-diphosphate + uracil. Its pathway is pyrimidine metabolism; UMP biosynthesis via salvage pathway; UMP from uracil: step 1/1. With respect to regulation, allosterically activated by GTP. Catalyzes the conversion of uracil and 5-phospho-alpha-D-ribose 1-diphosphate (PRPP) to UMP and diphosphate. This is Uracil phosphoribosyltransferase from Leifsonia xyli subsp. xyli (strain CTCB07).